Reading from the N-terminus, the 602-residue chain is Trichothecene efflux pump TRI12 (602 aa).

4 consecutive transmembrane segments (helical) span residues 49–69 (LTLL…SFII), 77–97 (NVSL…LLMG), 107–127 (GFIL…LYSF), and 134–154 (IGAQ…ILFI). N-linked (GlcNAc...) asparagine glycosylation occurs at N160. 11 helical membrane passes run 164–184 (FLGN…GPYI), 196–216 (WIFY…FIFY), 240–260 (WIGA…VSWG), 271–291 (ILGL…YECY), 297–317 (PIIP…MLLI), 355–375 (STAG…FHIF), 380–400 (WQLI…ASVN), 408–428 (IAFS…TMLL), 450–470 (AICG…KFPG), 484–504 (WGFP…LTGQ), and 532–552 (AAAY…AIIA). N590 is a glycosylation site (N-linked (GlcNAc...) asparagine).

The protein belongs to the major facilitator superfamily.

Its subcellular location is the cell membrane. In terms of biological role, efflux pump that provides the dual role of trichothecene export and self-protection by allowing the fungus to evade the harmful effect of its own trichothecene production. In Trichoderma arundinaceum, this protein is Trichothecene efflux pump TRI12.